Here is a 218-residue protein sequence, read N- to C-terminus: rRNA methyltransferase 2, mitochondrial (218 aa).

Residues 59 to 62 (PGSW), D80, 96 to 97 (DI), and D133 contribute to the S-adenosyl-L-methionine site. K173 serves as the catalytic Proton acceptor.

It belongs to the class I-like SAM-binding methyltransferase superfamily. RNA methyltransferase RlmE family.

The protein localises to the mitochondrion. The catalysed reaction is a uridine in 21S rRNA + S-adenosyl-L-methionine = a 2'-O-methyluridine in 21S rRNA + S-adenosyl-L-homocysteine + H(+). In terms of biological role, S-adenosyl-L-methionine-dependent 2'-O-ribose methyltransferase that catalyzes the formation of the 2'-O-methyluridine corresponding to position 2791 in S.cerevisiae 21S mitochondrial large subunit ribosomal RNA (mtLSU rRNA), a universally conserved modification in the peptidyl transferase domain of the mtLSU rRNA. The chain is rRNA methyltransferase 2, mitochondrial from Schizosaccharomyces pombe (strain 972 / ATCC 24843) (Fission yeast).